Consider the following 226-residue polypeptide: ATP-dependent dethiobiotin synthetase BioD (226 aa).

12-17 lines the ATP pocket; that stretch reads DAGKTV. A Mg(2+)-binding site is contributed by Thr-16. Residue Lys-39 is part of the active site. Residue Ser-43 coordinates substrate. Residues Asp-47, 108-111, 168-169, 200-202, and Asn-207 each bind ATP; these read EGVG, NC, and PYL. Mg(2+)-binding residues include Asp-47 and Glu-108.

This sequence belongs to the dethiobiotin synthetase family. As to quaternary structure, homodimer. The cofactor is Mg(2+).

It is found in the cytoplasm. The enzyme catalyses (7R,8S)-7,8-diammoniononanoate + CO2 + ATP = (4R,5S)-dethiobiotin + ADP + phosphate + 3 H(+). The catalysed reaction is (7R,8S)-8-amino-7-(carboxyamino)nonanoate + ATP = (4R,5S)-dethiobiotin + ADP + phosphate + H(+). Its pathway is cofactor biosynthesis; biotin biosynthesis; biotin from 7,8-diaminononanoate: step 1/2. Its function is as follows. Catalyzes a mechanistically unusual reaction, the ATP-dependent insertion of CO2 between the N7 and N8 nitrogen atoms of 7,8-diaminopelargonic acid (DAPA, also called 7,8-diammoniononanoate) to form a ureido ring. This cyanobacterium does not encode bioA (which catalyzes the formation of the precursor for this reaction in the cannonical pathway), instead it encodes bioU, which replaces bioA and also performs the first half of the cannonical BioD reaction. Thus in this organism BioD has a different substrate. In Cyanothece sp. (strain PCC 7425 / ATCC 29141), this protein is ATP-dependent dethiobiotin synthetase BioD.